Consider the following 129-residue polypeptide: Protein NrdI (129 aa).

The protein belongs to the NrdI family.

Probably involved in ribonucleotide reductase function. The polypeptide is Protein NrdI (Macrococcus caseolyticus (strain JCSC5402) (Macrococcoides caseolyticum)).